Here is a 481-residue protein sequence, read N- to C-terminus: GDP-fucose protein O-fucosyltransferase 3 (481 aa).

Residues 1 to 8 (MVRFQRRK) are Cytoplasmic-facing. Residues 9–31 (LLASCLCVTATVFLMVTLQVVVE) form a helical; Signal-anchor for type II membrane protein membrane-spanning segment. Topologically, residues 32-481 (LGKFERKKLK…EEFWALVFKD (450 aa)) are lumenal. 3 N-linked (GlcNAc...) asparagine glycosylation sites follow: Asn-110, Asn-168, and Asn-318. A disulfide bridge links Cys-389 with Cys-392. N-linked (GlcNAc...) asparagine glycosylation occurs at Asn-468.

This sequence belongs to the glycosyltransferase 10 family. Widely expressed, with a higher expression in liver and thymus.

Its subcellular location is the endoplasmic reticulum membrane. It catalyses the reaction L-threonyl-[protein] + GDP-beta-L-fucose = 3-O-(alpha-L-fucosyl)-L-threonyl-[protein] + GDP + H(+). The catalysed reaction is L-seryl-[protein] + GDP-beta-L-fucose = 3-O-(alpha-L-fucosyl)-L-seryl-[protein] + GDP + H(+). It participates in protein modification; protein glycosylation. Functionally, protein O-fucosyltransferase that specifically catalyzes O-fucosylation of serine or threonine residues in EMI domains of target proteins, such as MMRN1, MMRN2 and EMID1. Attaches fucose through an O-glycosidic linkage. O-fucosylation of EMI domain-containing proteins may be required for facilitating protein folding and secretion. May also show alpha-(1,3)-fucosyltransferase activity toward the innermost N-acetyl glucosamine (GlcNAc) residue in biantennary N-glycan acceptors. However, this was tested with a library of synthetic substrates and this activity is unsure in vivo. May be involved in biosynthesis of Lewis X-carrying biantennary N-glycans that regulate neuron stem cell self-renewal during brain development. The sequence is that of GDP-fucose protein O-fucosyltransferase 3 from Mus musculus (Mouse).